Here is a 557-residue protein sequence, read N- to C-terminus: Formate--tetrahydrofolate ligase (557 aa).

67 to 74 contacts ATP; the sequence is TPAGEGKT.

Belongs to the formate--tetrahydrofolate ligase family.

The catalysed reaction is (6S)-5,6,7,8-tetrahydrofolate + formate + ATP = (6R)-10-formyltetrahydrofolate + ADP + phosphate. It participates in one-carbon metabolism; tetrahydrofolate interconversion. The sequence is that of Formate--tetrahydrofolate ligase from Cereibacter sphaeroides (strain KD131 / KCTC 12085) (Rhodobacter sphaeroides).